The following is a 250-amino-acid chain: ATP synthase subunit a (250 aa).

The next 6 helical transmembrane spans lie at 26 to 46 (FTNASLFMVATVGAAAGFLYL), 84 to 104 (FFPMVFSLFMFILTANLLGMV), 114 to 134 (IIVTFALAVFVIGTVILYGFY), 143 to 163 (LFVPHGVPGALLPLVVAIEII), 193 to 213 (FVASLSAFGALGIGGAILPLI), and 216 to 236 (VALTGLEFLVAFLQAYVFAVL).

It belongs to the ATPase A chain family. As to quaternary structure, F-type ATPases have 2 components, CF(1) - the catalytic core - and CF(0) - the membrane proton channel. CF(1) has five subunits: alpha(3), beta(3), gamma(1), delta(1), epsilon(1). CF(0) has three main subunits: a(1), b(2) and c(9-12). The alpha and beta chains form an alternating ring which encloses part of the gamma chain. CF(1) is attached to CF(0) by a central stalk formed by the gamma and epsilon chains, while a peripheral stalk is formed by the delta and b chains.

The protein resides in the cell inner membrane. Key component of the proton channel; it plays a direct role in the translocation of protons across the membrane. This is ATP synthase subunit a from Sinorhizobium medicae (strain WSM419) (Ensifer medicae).